The chain runs to 534 residues: NAD(P)H-quinone oxidoreductase chain 4 1 (534 aa).

The next 14 helical transmembrane spans lie at Ile6 to Ile26, Ile34 to Trp54, Leu87 to Trp107, Pro113 to Val133, Leu136 to Ile156, Phe169 to Phe189, Ala209 to Phe229, Ser243 to Ile263, Phe277 to Phe297, Ile311 to Gly331, Ala332 to Val352, Phe376 to Val396, Ile418 to Leu438, and Ile464 to Ala484.

It belongs to the complex I subunit 4 family.

The protein resides in the cellular thylakoid membrane. It carries out the reaction a plastoquinone + NADH + (n+1) H(+)(in) = a plastoquinol + NAD(+) + n H(+)(out). The enzyme catalyses a plastoquinone + NADPH + (n+1) H(+)(in) = a plastoquinol + NADP(+) + n H(+)(out). In terms of biological role, NDH-1 shuttles electrons from NAD(P)H, via FMN and iron-sulfur (Fe-S) centers, to quinones in the respiratory chain. The immediate electron acceptor for the enzyme in this species is believed to be plastoquinone. Couples the redox reaction to proton translocation (for every two electrons transferred, four hydrogen ions are translocated across the cytoplasmic membrane), and thus conserves the redox energy in a proton gradient. This Picosynechococcus sp. (strain ATCC 27264 / PCC 7002 / PR-6) (Agmenellum quadruplicatum) protein is NAD(P)H-quinone oxidoreductase chain 4 1.